We begin with the raw amino-acid sequence, 205 residues long: Small ribosomal subunit protein uS4 (205 aa).

Residues 1 to 16 (MSKRETTKYKIDRRMG) show a composition bias toward basic and acidic residues. The segment at 1–46 (MSKRETTKYKIDRRMGENIWGRPKSPVNRRDYGPGQHGQRRKGKLS) is disordered. Positions 94 to 157 (SRLDAVIYRA…KQLVLVLESV (64 aa)) constitute an S4 RNA-binding domain.

Belongs to the universal ribosomal protein uS4 family. Part of the 30S ribosomal subunit. Contacts protein S5. The interaction surface between S4 and S5 is involved in control of translational fidelity.

In terms of biological role, one of the primary rRNA binding proteins, it binds directly to 16S rRNA where it nucleates assembly of the body of the 30S subunit. With S5 and S12 plays an important role in translational accuracy. This chain is Small ribosomal subunit protein uS4, found in Bartonella quintana (strain Toulouse) (Rochalimaea quintana).